A 370-amino-acid chain; its full sequence is Trans-enoyl reductase xenG (370 aa).

Positions 1–32 (MASTGLPQLPPSQKAVIQSEKTPGAFEVSENR) are disordered. NADP(+) is bound by residues 54-57 (CDWK), 177-180 (STAS), 200-203 (SPKN), Tyr218, 265-266 (FE), and 356-357 (VS).

Belongs to the zinc-containing alcohol dehydrogenase family. As to quaternary structure, monomer.

It participates in mycotoxin biosynthesis. In terms of biological role, trans-enoyl reductase; part of the gene cluster that mediates the biosynthesis of xenoacremones such as xenoacremone A, a compound that shows inhibitory activity toward the PI3K/AKT signaling pathway and which has the ability to induce apoptosis of A549 lung cancer cells. Within the pathway, cooperation of the hybrid PKS-NRPS xenE and the trans-acting enoyl reductase xenG is responsible for the formation of the reduced tyrosine-nonaketide derivative. The alpha/beta hydrolase xenA then accelerates intramolecular nucleophilic attack to give a pyrrolidone derivative. Subsequently, three enzymes, xenF, xenD, and xenC, coordinately participate in the conversion to xenoacremone B. XenF catalyzes sigmatropic rearrangement to form an A-ring, which leads to an unusual intermediate with a hexane ring, which is required for the formation of the tricarbocyclic product. Epoxidation catalyzed by xenD and the formation of the paracyclophane ether catalyzed by xenC initiate a spontaneous intramolecular Diels-Alder (IMDA) reaction to yield xenoacremone B. Spontaneous hydration of xenoacremone B leads to the formation of xenoacremone A, which undergoes subsequent methylation to afford xenoacremone C. This Xenoacremonium sinensis (Endophyte fungus) protein is Trans-enoyl reductase xenG.